Consider the following 256-residue polypeptide: Phosphonates import ATP-binding protein PhnC (256 aa).

The ABC transporter domain occupies 2 to 246 (LKVIQLDKTY…VLQHIYRQPD (245 aa)). An ATP-binding site is contributed by 35–42 (GPSGAGKT).

Belongs to the ABC transporter superfamily. Phosphonates importer (TC 3.A.1.9.1) family. As to quaternary structure, the complex is composed of two ATP-binding proteins (PhnC), two transmembrane proteins (PhnE) and a solute-binding protein (PhnD).

It is found in the cell membrane. The enzyme catalyses phosphonate(out) + ATP + H2O = phosphonate(in) + ADP + phosphate + H(+). Its function is as follows. Part of the ABC transporter complex PhnCDE involved in phosphonates import. Responsible for energy coupling to the transport system. The chain is Phosphonates import ATP-binding protein PhnC from Lactiplantibacillus plantarum (strain ATCC BAA-793 / NCIMB 8826 / WCFS1) (Lactobacillus plantarum).